An 835-amino-acid polypeptide reads, in one-letter code: MTDEAEDSGPGGYAAARLRLLTEGARSGPPRRRALAELTDGWLAGLFGAATEEHTGISLVAVGGYGRGELSPRSDLDLLLLHDGRDDKAVAALADRLWYPVWDLGIDLDHSVRTPQQARKTAGQDLKVHLGLLDARHLAGDLGLTASLRTAVLADWRNQAPKRLPELRDLCAERAERQGELQFLLEPDLKEARGGLRDATALRAVAASWLADAPREGLAEARRRLLDVRDALHLATGRATDRLALQEQDQVAAELGLLDADALLRQVYEAARVISYAGDVTWREVGRVLRSRSVRPRLRAMMNGRNGGKPVAERSPLAEGVVEQDGEAVLARTARPERDPALPLRAAAAAAQAGLPLSRHAVRRLAATARPLPTPWPAEAREQLVTLLGSGRPTVQVWEALEAEGLVTRLLPDWERVRCRPQRNAVHLWTVDRHLIETAVRAAGFTRRVHRPDLLLIAALLHDIGKGWPGDHSVAGETIARDVAARIGFDGADTAVLATLVRHHLLLVETATRRDLDDPATVRAVAQAVGTEHTLELLHALTEADALATGPAAWSSWRGSLVADLVKRVSGVLAGEPQPEAESAAPTAEQERLAVEAFRTGGPVLALRAQTEPPADSAPAPSSPSSPSFPSPLSSPSSPSSADGPEPLGVELLIAVPDQAGVLPAVAGVLAMHRLTVRTAELRSVPLPDGVEGSVLLLDWRVAAQYGSLPQAARLRADLVRALDGTLDIAARLAERDAAHPRRRGVEPPPPRVTVAPAASRLATVIEVRAQDAPGLLFRLGRALEAAGVRVRSAHVSTLGANAVDAFYVTRGEGTPLPGDEAASVARGLEESLRT.

The uridylyltransferase stretch occupies residues 1-316; that stretch reads MTDEAEDSGP…GGKPVAERSP (316 aa). Residues 317–650 are uridylyl-removing; it reads LAEGVVEQDG…SADGPEPLGV (334 aa). Residues 431–554 form the HD domain; that stretch reads VDRHLIETAV…DALATGPAAW (124 aa). The interval 610 to 645 is disordered; it reads QTEPPADSAPAPSSPSSPSFPSPLSSPSSPSSADGP. Positions 621–630 are enriched in pro residues; that stretch reads PSSPSSPSFP. Positions 631–642 are enriched in low complexity; it reads SPLSSPSSPSSA. ACT domains follow at residues 651–736 and 765–835; these read ELLI…LAER and VIEV…SLRT.

This sequence belongs to the GlnD family. It depends on Mg(2+) as a cofactor.

The enzyme catalyses [protein-PII]-L-tyrosine + UTP = [protein-PII]-uridylyl-L-tyrosine + diphosphate. The catalysed reaction is [protein-PII]-uridylyl-L-tyrosine + H2O = [protein-PII]-L-tyrosine + UMP + H(+). Uridylyltransferase (UTase) activity is inhibited by glutamine, while glutamine activates uridylyl-removing (UR) activity. Its function is as follows. Modifies, by uridylylation and deuridylylation, the PII regulatory proteins (GlnB and homologs), in response to the nitrogen status of the cell that GlnD senses through the glutamine level. Under low glutamine levels, catalyzes the conversion of the PII proteins and UTP to PII-UMP and PPi, while under higher glutamine levels, GlnD hydrolyzes PII-UMP to PII and UMP (deuridylylation). Thus, controls uridylylation state and activity of the PII proteins, and plays an important role in the regulation of nitrogen assimilation and metabolism. This chain is Bifunctional uridylyltransferase/uridylyl-removing enzyme, found in Streptomyces coelicolor (strain ATCC BAA-471 / A3(2) / M145).